The sequence spans 183 residues: Heavy metal-associated isoprenylated plant protein 44 (183 aa).

The 64-residue stretch at leucine 50 to glutamate 113 folds into the HMA domain. Positions 61 and 64 each coordinate a metal cation. Cysteine 180 carries the post-translational modification Cysteine methyl ester. Cysteine 180 carries S-farnesyl cysteine lipidation. A propeptide spans arginine 181–methionine 183 (removed in mature form).

This sequence belongs to the HIPP family.

Functionally, heavy-metal-binding protein. In Arabidopsis thaliana (Mouse-ear cress), this protein is Heavy metal-associated isoprenylated plant protein 44.